The sequence spans 752 residues: Protein WEAK CHLOROPLAST MOVEMENT UNDER BLUE LIGHT-like 2 (752 aa).

Phosphoserine is present on serine 143. Coiled coils occupy residues 186–557 and 596–651; these read ERRK…SRAS and ELSK…KEAM. Residues 476–495 are disordered; that stretch reads KHDLSETRQRNREDTREEKC. Residues 653–675 show a composition bias toward basic and acidic residues; it reads KVEKARDGKVGMDHELRKWRSDN. The segment at 653 to 733 is disordered; sequence KVEKARDGKV…ETETKKKKKR (81 aa). The span at 690–723 shows a compositional bias: polar residues; it reads KSKSALHQPTTFTFGEQASSSNVTPQASSSNVTP.

Belongs to the WEB family.

This chain is Protein WEAK CHLOROPLAST MOVEMENT UNDER BLUE LIGHT-like 2 (WEL2), found in Arabidopsis thaliana (Mouse-ear cress).